Here is a 273-residue protein sequence, read N- to C-terminus: Diaminopimelate epimerase (273 aa).

Positions 11 and 60 each coordinate substrate. Cys69 serves as the catalytic Proton donor. Substrate contacts are provided by residues 70 to 71, Asn181, and 199 to 200; these read GN and ER. The active-site Proton acceptor is Cys209. Substrate is bound at residue 210-211; it reads GT.

It belongs to the diaminopimelate epimerase family. Homodimer.

The protein resides in the cytoplasm. It catalyses the reaction (2S,6S)-2,6-diaminopimelate = meso-2,6-diaminopimelate. The protein operates within amino-acid biosynthesis; L-lysine biosynthesis via DAP pathway; DL-2,6-diaminopimelate from LL-2,6-diaminopimelate: step 1/1. Its function is as follows. Catalyzes the stereoinversion of LL-2,6-diaminopimelate (L,L-DAP) to meso-diaminopimelate (meso-DAP), a precursor of L-lysine and an essential component of the bacterial peptidoglycan. This is Diaminopimelate epimerase from Helicobacter pylori (strain Shi470).